The following is an 862-amino-acid chain: Molybdenum cofactor sulfurase (862 aa).

Residue Ser34 is modified to Phosphoserine. At Lys264 the chain carries N6-(pyridoxal phosphate)lysine. The active site involves Cys424. Ser517 bears the Phosphoserine mark. An MOSC domain is found at 704–855 (RKTPKKGQPP…LSVGSEVLPV (152 aa)).

This sequence belongs to the class-V pyridoxal-phosphate-dependent aminotransferase family. MOCOS subfamily. It depends on pyridoxal 5'-phosphate as a cofactor.

The catalysed reaction is Mo-molybdopterin + L-cysteine + AH2 = thio-Mo-molybdopterin + L-alanine + A + H2O. It functions in the pathway cofactor biosynthesis; molybdopterin biosynthesis. Functionally, sulfurates the molybdenum cofactor. Sulfation of molybdenum is essential for xanthine dehydrogenase (XDH) and aldehyde oxidase (ADO) enzymes in which molybdenum cofactor is liganded by 1 oxygen and 1 sulfur atom in active form. The protein is Molybdenum cofactor sulfurase (Mocos) of Mus musculus (Mouse).